A 128-amino-acid chain; its full sequence is Large ribosomal subunit protein bL17 (128 aa).

This sequence belongs to the bacterial ribosomal protein bL17 family. In terms of assembly, part of the 50S ribosomal subunit. Contacts protein L32.

The protein is Large ribosomal subunit protein bL17 of Hydrogenovibrio crunogenus (strain DSM 25203 / XCL-2) (Thiomicrospira crunogena).